Here is a 228-residue protein sequence, read N- to C-terminus: Tumor necrosis factor receptor superfamily member 18 (228 aa).

A signal peptide spans 1-19 (MGAWAMLYGVSMLCVLDLG). Residues 20–153 (QPSVVEEPGC…EPLPTEQYGH (134 aa)) lie on the Extracellular side of the membrane. 3 TNFR-Cys repeats span residues 28-61 (GCGP…ERCI), 62-101 (CVTP…FRCV), and 102-142 (ACAM…AVCI). Disulfide bonds link Cys29/Cys44, Cys62/Cys74, Cys69/Cys82, Cys103/Cys122, and Cys116/Cys141. N-linked (GlcNAc...) asparagine glycosylation is found at Asn36 and Asn40. 2 N-linked (GlcNAc...) asparagine glycosylation sites follow: Asn121 and Asn134. A helical transmembrane segment spans residues 154–174 (LTVIFLVMAACIFFLTTVQLG). At 175-228 (LHIWQLRRQHMCPRETQPFAEVQLSAEDACSFQFPEEERGEQTEEKCHLGGRWP) the chain is on the cytoplasmic side.

As to quaternary structure, binds to TRAF1, TRAF2, and TRAF3, but not TRAF5 and TRAF6. Binds through its C-terminus to SIVA1/SIVA. Preferentially expressed in activated T lymphocytes.

The protein resides in the cell membrane. Its subcellular location is the secreted. Receptor for TNFSF18. Seems to be involved in interactions between activated T-lymphocytes and endothelial cells and in the regulation of T-cell receptor-mediated cell death. Mediated NF-kappa-B activation via the TRAF2/NIK pathway. The chain is Tumor necrosis factor receptor superfamily member 18 (Tnfrsf18) from Mus musculus (Mouse).